Consider the following 290-residue polypeptide: Glycine--tRNA ligase alpha subunit (290 aa).

It belongs to the class-II aminoacyl-tRNA synthetase family. As to quaternary structure, tetramer of two alpha and two beta subunits.

The protein resides in the cytoplasm. The catalysed reaction is tRNA(Gly) + glycine + ATP = glycyl-tRNA(Gly) + AMP + diphosphate. This Maridesulfovibrio salexigens (strain ATCC 14822 / DSM 2638 / NCIMB 8403 / VKM B-1763) (Desulfovibrio salexigens) protein is Glycine--tRNA ligase alpha subunit.